A 122-amino-acid polypeptide reads, in one-letter code: uncharacterized protein (122 aa).

It belongs to the phage O protein family.

This is an uncharacterized protein from Escherichia coli O6:H1 (strain CFT073 / ATCC 700928 / UPEC).